Reading from the N-terminus, the 517-residue chain is Nicotine N-demethylase CYP82E4 (517 aa).

Residues 2–22 (VFPIEAIVGLVTFTFLFFFLW) traverse the membrane as a helical segment. Lys-254 is covalently cross-linked (Glycyl lysine isopeptide (Lys-Gly) (interchain with G-Cter in ubiquitin)). A heme-binding site is contributed by Cys-457.

It belongs to the cytochrome P450 family. CYP82E2 subfamily. Heme serves as cofactor. Expressed at low levels in green leaves.

The protein localises to the membrane. The catalysed reaction is (S)-nicotine + reduced [NADPH--hemoprotein reductase] + O2 = (S)-nornicotine + formaldehyde + oxidized [NADPH--hemoprotein reductase] + H2O + H(+). It functions in the pathway alkaloid biosynthesis; nicotine biosynthesis. Its function is as follows. Involved in the biosynthesis of pyridine alkaloid natural products, leading mainly to the production of anabasine, anatabine, nicotine and nornicotine, effective deterrents against herbivores with antiparasitic and pesticide properties (neurotoxins); nornicotine serves as the precursor in the synthesis of the carcinogen compound N'-nitrosonornicotine (NNN). Catalyzes the demethylation of nicotine to form nornicotine. In Nicotiana tabacum (Common tobacco), this protein is Nicotine N-demethylase CYP82E4.